We begin with the raw amino-acid sequence, 311 residues long: Olfactory receptor 6B1 (311 aa).

Residues 1–25 lie on the Extracellular side of the membrane; sequence MELENQTRVTKFILVGFPGSLSMRA. N5 is a glycosylation site (N-linked (GlcNAc...) asparagine). Residues 26 to 46 form a helical membrane-spanning segment; it reads AMFLIFLVAYILTVAENVIII. At 47–54 the chain is on the cytoplasmic side; that stretch reads LLVLQNRP. A helical membrane pass occupies residues 55 to 75; the sequence is LHKPMYFFLANLSFLETWYIS. The Extracellular segment spans residues 76 to 99; that stretch reads VTVPKLLFSFWSVNNSISFTLCMI. C97 and C189 form a disulfide bridge. The chain crosses the membrane as a helical span at residues 100–120; that stretch reads QLYFFIALMCTECVLLAAMAY. Residues 121 to 139 are Cytoplasmic-facing; that stretch reads DRYVAICRPLHYPTIMSHG. Residues 140-160 form a helical membrane-spanning segment; it reads LCFRLALGSWAIGFGISLAKI. Residues 161 to 196 lie on the Extracellular side of the membrane; the sequence is YFISCLSFCGPNVINHFFCDISPVLNLSCTDMSITE. The chain crosses the membrane as a helical span at residues 197-217; it reads LVDFILALVIFLFPLFITVLS. The Cytoplasmic segment spans residues 218–235; sequence YGCILATILCMPTGKQKA. Residues 236 to 256 form a helical membrane-spanning segment; it reads FSTCASHLVVVTIFYSAIIFM. Over 257–269 the chain is Extracellular; the sequence is YARPRVIHAFNMN. Residues 270-290 traverse the membrane as a helical segment; that stretch reads KIISIFYAIVTPSLNPFIYCL. The Cytoplasmic portion of the chain corresponds to 291–311; it reads RNREVKEALKKLAYCQASRSD.

The protein belongs to the G-protein coupled receptor 1 family.

It is found in the cell membrane. Odorant receptor. The polypeptide is Olfactory receptor 6B1 (OR6B1) (Homo sapiens (Human)).